A 930-amino-acid polypeptide reads, in one-letter code: G patch domain-containing protein TGH (930 aa).

Lysine 25 participates in a covalent cross-link: Glycyl lysine isopeptide (Lys-Gly) (interchain with G-Cter in ubiquitin). Residues 76–152 form a disordered region; that stretch reads GWAPQSFTSS…PSAIPGPVPD (77 aa). A G-patch domain is found at 159 to 199; it reads SESIGVKLLLKMGWRRGHSIKEVRASSDARREARKAFLAFY. Residues 405–447 form an SURP motif repeat; sequence LIEGFATFVSRCGKLYEDLSREKNQSNQLFDFLREGNGHDYYA. Disordered regions lie at residues 478–508, 687–751, and 773–930; these read AETR…GSFQ, RQVS…NEAA, and FEVP…RRRD. Residues 489 to 498 show a composition bias toward basic and acidic residues; sequence PLQRSLKETD. A compositionally biased stretch (polar residues) spans 499–508; it reads TSASSGGSFQ. Acidic residues predominate over residues 701–711; sequence IEEPEVEVEVE. A compositionally biased stretch (basic and acidic residues) spans 779-808; the sequence is EEIKSRSKPEDSSDKRLDRPGLKEKVEEKT. The segment covering 848-857 has biased composition (basic residues); the sequence is RRKRYNKKDR. A compositionally biased stretch (basic and acidic residues) spans 858–877; the sequence is HRNDSESDSSSDYHSRDKQG. The segment covering 892–908 has biased composition (basic residues); sequence RSSHKKHSKHRRTKKSS. The segment covering 913–923 has biased composition (basic and acidic residues); that stretch reads SSDEEQKESRR.

As to expression, expressed in vasculature of cotyledons and leaves, young meristematic tissues, trichomes and pistils.

It localises to the nucleus speckle. The protein resides in the nucleus. The protein localises to the nucleoplasm. Functionally, functions as a component of microRNA (miRNA) and small interfering RNA (siRNA) biogenesis. May assist DCL1 and DCL4 to efficiently process and/or recruit the precursors of miRNAs and siRNAs. In the miRNA biogenesis pathway, associates with the DCL1 complex that processes primary miRNAs (pri-miRNAs) into miRNAs. Binds pri-miRNAs and precursor miRNAs (pre-miRNAs). Is required for the interaction between pri-miRNAs and DRB1. Required for general proper plant growth and, in particular, initiation of vascular development. Interacts genetically with AMP1, a glutamate carboxypeptidase involved in the regulation of meristem function. The protein is G patch domain-containing protein TGH of Arabidopsis thaliana (Mouse-ear cress).